The chain runs to 543 residues: Myotubularin-related protein 9-like (543 aa).

In terms of domain architecture, Myotubularin phosphatase spans 124–502 (AWHFHPPECY…QSLRLWQGLF (379 aa)).

It belongs to the protein-tyrosine phosphatase family. Non-receptor class myotubularin subfamily.

Its function is as follows. Probable pseudophosphatase. The polypeptide is Myotubularin-related protein 9-like (Bos taurus (Bovine)).